The chain runs to 145 residues: uncharacterized protein (145 aa).

A run of 4 helical transmembrane segments spans residues 1 to 21, 28 to 48, 54 to 74, and 96 to 116; these read MELF…YFLI, TVLI…MGAL, SMTS…AYVM, and FFLI…IPSA.

The protein belongs to the DcuC/DcuD transporter (TC 2.A.61) family.

It localises to the cell membrane. This is an uncharacterized protein from Haemophilus influenzae (strain ATCC 51907 / DSM 11121 / KW20 / Rd).